The chain runs to 221 residues: Large ribosomal subunit protein uL4 (221 aa).

A disordered region spans residues T48–S77.

This sequence belongs to the universal ribosomal protein uL4 family. Part of the 50S ribosomal subunit.

In terms of biological role, one of the primary rRNA binding proteins, this protein initially binds near the 5'-end of the 23S rRNA. It is important during the early stages of 50S assembly. It makes multiple contacts with different domains of the 23S rRNA in the assembled 50S subunit and ribosome. Forms part of the polypeptide exit tunnel. The chain is Large ribosomal subunit protein uL4 from Thermosipho africanus (strain TCF52B).